Consider the following 335-residue polypeptide: MEEGSNKREGLPPQLLDLIPDEKEWKLREALGLGRSRNAGFDGEEDKKLDLKLGLPGFIEDDEAETLRDYRLQQESPSLSLSFFPKHSKTTSSTTTTTGAKRGFIDTVEDKTEGYNDQKQQARAGCGKELAVEEMIAAVSERKKGCCPPPPPPHGAPATPARNRPQTQGRGAAAPVVGWPPIRSFRRNLASSSSSKHSPEPQNDNANAKVTLTCKKNPLVKINMDGIPIGRKIDLAAYNSYDGLSSAVKQLFHGFLQAQKDQTNAQIAQQGADDKIFYQLLDGSGEYTLVYEDSEGDRMLVGDVPWKVFVSTAKRLRVLRSSELSHTLIGATARV.

Residues 51–55 carry the EAR-like (transcriptional repression) motif; sequence LKLGL. Disordered regions lie at residues 81–102, 143–180, and 188–207; these read LSFFPKHSKTTSSTTTTTGAKR, KKGCCPPPPPPHGAPATPARNRPQTQGRGAAAPVVGWP, and NLASSSSSKHSPEPQNDNAN. The PB1 domain occupies 217–321; it reads NPLVKINMDG…TAKRLRVLRS (105 aa).

It belongs to the Aux/IAA family. Homodimers and heterodimers. In terms of tissue distribution, highly expressed in roots. Expressed in shoots and flowers.

The protein localises to the nucleus. In terms of biological role, aux/IAA proteins are short-lived transcriptional factors that function as repressors of early auxin response genes at low auxin concentrations. This chain is Auxin-responsive protein IAA6 (IAA6), found in Oryza sativa subsp. japonica (Rice).